Consider the following 503-residue polypeptide: Putative acyl--CoA ligase YdaB (503 aa).

This sequence belongs to the ATP-dependent AMP-binding enzyme family.

The chain is Putative acyl--CoA ligase YdaB (ydaB) from Bacillus subtilis (strain 168).